A 388-amino-acid polypeptide reads, in one-letter code: Omega-hydroxy-beta-dihydromenaquinone-9 sulfotransferase Stf3 (388 aa).

It belongs to the Stf3 family.

The catalysed reaction is omega-hydroxy-beta-dihydromenaquinone-9 + 3'-phosphoadenylyl sulfate = omega-sulfo-beta-dihydromenaquinone-9 + adenosine 3',5'-bisphosphate + H(+). Functionally, involved in the biosynthesis of sulfomenaquinone (SMK, initially named S881 on the basis of its mass), which is localized in the outer envelope of M.bovis and negatively regulates its virulence. Catalyzes the transfer of a sulfonate group from 3'-phosphoadenosine-5'-phosphosulfate (PAPS) to omega-hydroxy-beta-dihydromenaquinone-9, generating omega-sulfo-beta-dihydromenaquinone-9 (sulfomenaquinone). This chain is Omega-hydroxy-beta-dihydromenaquinone-9 sulfotransferase Stf3, found in Mycobacterium bovis (strain ATCC BAA-935 / AF2122/97).